Consider the following 198-residue polypeptide: Elongation factor Ts (198 aa).

Residues 81-84 (TDFV) are involved in Mg(2+) ion dislocation from EF-Tu.

It belongs to the EF-Ts family.

The protein localises to the cytoplasm. In terms of biological role, associates with the EF-Tu.GDP complex and induces the exchange of GDP to GTP. It remains bound to the aminoacyl-tRNA.EF-Tu.GTP complex up to the GTP hydrolysis stage on the ribosome. The chain is Elongation factor Ts from Leptospira biflexa serovar Patoc (strain Patoc 1 / Ames).